The chain runs to 520 residues: DNA mismatch repair protein MutL (520 aa).

It belongs to the DNA mismatch repair MutL/HexB family.

In terms of biological role, this protein is involved in the repair of mismatches in DNA. It is required for dam-dependent methyl-directed DNA mismatch repair. May act as a 'molecular matchmaker', a protein that promotes the formation of a stable complex between two or more DNA-binding proteins in an ATP-dependent manner without itself being part of a final effector complex. In Persephonella marina (strain DSM 14350 / EX-H1), this protein is DNA mismatch repair protein MutL.